A 200-amino-acid chain; its full sequence is NADH-quinone oxidoreductase subunit C (200 aa).

Belongs to the complex I 30 kDa subunit family. NDH-1 is composed of 14 different subunits. Subunits NuoB, C, D, E, F, and G constitute the peripheral sector of the complex.

It localises to the cell inner membrane. It catalyses the reaction a quinone + NADH + 5 H(+)(in) = a quinol + NAD(+) + 4 H(+)(out). Functionally, NDH-1 shuttles electrons from NADH, via FMN and iron-sulfur (Fe-S) centers, to quinones in the respiratory chain. The immediate electron acceptor for the enzyme in this species is believed to be ubiquinone. Couples the redox reaction to proton translocation (for every two electrons transferred, four hydrogen ions are translocated across the cytoplasmic membrane), and thus conserves the redox energy in a proton gradient. This Burkholderia ambifaria (strain ATCC BAA-244 / DSM 16087 / CCUG 44356 / LMG 19182 / AMMD) (Burkholderia cepacia (strain AMMD)) protein is NADH-quinone oxidoreductase subunit C.